A 406-amino-acid polypeptide reads, in one-letter code: Serine/threonine transporter SstT (406 aa).

9 helical membrane-spanning segments follow: residues 15–35 (LVIQ…VSPS), 47–67 (FVGA…AASI), 81–101 (IIVM…VLSF), 140–160 (ALMS…GLAL), 191–211 (FGIF…ALAG), 215–235 (LLVV…PAMV), 289–309 (IPLG…TLTL), 315–335 (MGIE…AVSA), and 362–382 (IAMQ…SAET).

The protein belongs to the dicarboxylate/amino acid:cation symporter (DAACS) (TC 2.A.23) family.

It localises to the cell inner membrane. It catalyses the reaction L-serine(in) + Na(+)(in) = L-serine(out) + Na(+)(out). The catalysed reaction is L-threonine(in) + Na(+)(in) = L-threonine(out) + Na(+)(out). Functionally, involved in the import of serine and threonine into the cell, with the concomitant import of sodium (symport system). This Vibrio vulnificus (strain YJ016) protein is Serine/threonine transporter SstT.